The primary structure comprises 29 residues: SGSIIHSMEANVGYSPDKSQNMVLMGGLK.

A helical transmembrane segment spans residues 1–15 (SGSIIHSMEANVGYS).

It belongs to the complex I subunit 5 family. NDH is composed of at least 16 different subunits, 5 of which are encoded in the nucleus.

It is found in the plastid. Its subcellular location is the chloroplast thylakoid membrane. The catalysed reaction is a plastoquinone + NADH + (n+1) H(+)(in) = a plastoquinol + NAD(+) + n H(+)(out). It carries out the reaction a plastoquinone + NADPH + (n+1) H(+)(in) = a plastoquinol + NADP(+) + n H(+)(out). NDH shuttles electrons from NAD(P)H:plastoquinone, via FMN and iron-sulfur (Fe-S) centers, to quinones in the photosynthetic chain and possibly in a chloroplast respiratory chain. The immediate electron acceptor for the enzyme in this species is believed to be plastoquinone. Couples the redox reaction to proton translocation, and thus conserves the redox energy in a proton gradient. In Pseudotsuga menziesii (Douglas-fir), this protein is NAD(P)H-quinone oxidoreductase subunit 5, chloroplastic.